A 136-amino-acid polypeptide reads, in one-letter code: Protein NrdI (136 aa).

Belongs to the NrdI family.

Probably involved in ribonucleotide reductase function. In Salmonella paratyphi A (strain ATCC 9150 / SARB42), this protein is Protein NrdI.